Reading from the N-terminus, the 420-residue chain is Glycogen synthase kinase-3 beta (420 aa).

A compositionally biased stretch (polar residues) spans 1–22; it reads MSGRPRTTSFAESCKPVQQPSA. Residues 1 to 53 are disordered; it reads MSGRPRTTSFAESCKPVQQPSAFGSMKVSRDKDGSKVTTVVATPGQGPDRPQE. Ser-9 is subject to Phosphoserine; by PKB/AKT1, RPS6KA3 and SGK3. Cys-14 is lipidated: S-palmitoyl cysteine. In terms of domain architecture, Protein kinase spans 56-340; the sequence is YTDTKVIGNG…PLEACAHSFF (285 aa). ATP-binding positions include 62-70 and Lys-85; that span reads IGNGSFGVV. The active-site Proton acceptor is the Asp-181. Tyr-216 is subject to Phosphotyrosine. The interval 385 to 420 is disordered; the sequence is QAAASPPANATAASDTNAGDRGQTNNAASASASNST. Low complexity-rich tracts occupy residues 386–401 and 409–420; these read AAASPPANATAASDTN and NNAASASASNST. Ser-389 carries the post-translational modification Phosphoserine.

It belongs to the protein kinase superfamily. CMGC Ser/Thr protein kinase family. GSK-3 subfamily. Monomer. Interacts with DAB2IP (via C2 domain); the interaction stimulates GSK3B kinase activation. Interacts (via C2 domain) with PPP2CA. Interacts with CABYR, MMP2, MUC1, NIN and PRUNE1. Interacts with AXIN1; the interaction mediates hyperphosphorylation of CTNNB1 leading to its ubiquitination and destruction. Interacts with and phosphorylates SNAI1. Interacts with DNM1L (via a C-terminal domain). Interacts with ARRB2. Interacts with DISC1. Found in a complex composed of MACF1, APC, AXIN1, CTNNB1 and GSK3B. Interacts with SGK3. Interacts with the CLOCK-BMAL1 heterodimer. Interacts with ZBED3. Interacts with the BMAL1. The complex composed, at least, of APC, CTNNB1 and GSK3B interacts with JPT1; the interaction requires the inactive form of GSK3B (phosphorylated at 'Ser-9'). Forms a complex composed of PRKAR2A or PRKAR2B, GSK3B and GSKIP through GSKIP interaction; facilitates PKA-induced phosphorylation and regulates GSK3B activity. Interacts with GSKIP. Interacts with GID8. Interacts with PIWIL2. Interacts with LMBR1L. Interacts with DDX3X. Interacts with BIRC2. Interacts with TNFRSF10B; TNFRSF10B stimulation inhibits GSK3B kinase activity. Found in a complex with SLC39A6, SLC39A10 and with GSK3B that controls NCAM1 phosphorylation. Interacts with PKP3 (via ARM repeats); the interaction may be involved in PKP3 protein degradation. Post-translationally, phosphorylated by AKT1 and ILK1. Upon insulin-mediated signaling, the activated PKB/AKT1 protein kinase phosphorylates and deactivates GSK3B, resulting in the dephosphorylation and activation of GYS1. Activated by phosphorylation at Tyr-216. Phosphorylation of Ser-9 in the hippocampus peaks at CT0, whereas in the liver it peaks at CT12. Inactivated by phosphorylation at Ser-9. Phosphorylated in a circadian manner in the hippocampus. In terms of processing, mono-ADP-ribosylation by PARP10 negatively regulates kinase activity. Palmitoylated. Palmitoylation by ZDHHC4 prevents AKT1-mediated phosphorylation. As to expression, expressed in the liver (at protein level).

The protein resides in the cytoplasm. The protein localises to the nucleus. Its subcellular location is the cell membrane. It catalyses the reaction L-seryl-[tau protein] + ATP = O-phospho-L-seryl-[tau protein] + ADP + H(+). It carries out the reaction L-threonyl-[tau protein] + ATP = O-phospho-L-threonyl-[tau protein] + ADP + H(+). The catalysed reaction is L-seryl-[protein] + ATP = O-phospho-L-seryl-[protein] + ADP + H(+). The enzyme catalyses L-threonyl-[protein] + ATP = O-phospho-L-threonyl-[protein] + ADP + H(+). Its activity is regulated as follows. Activated by phosphorylation at Tyr-216. In response to insulin, inhibited by phosphorylation at Ser-9 by PKB/AKT1 and RPS6KA3; phosphorylation at this site causes a conformational change, preventing access of substrates to the active site. Inhibited by IL22 treatment which also triggers phosphorylation at Ser-9, promoting inactivation. Inhibited by lithium. Its function is as follows. Constitutively active protein kinase that acts as a negative regulator in the hormonal control of glucose homeostasis, Wnt signaling and regulation of transcription factors and microtubules, by phosphorylating and inactivating glycogen synthase (GYS1 or GYS2), EIF2B, CTNNB1/beta-catenin, APC, AXIN1, DPYSL2/CRMP2, JUN, NFATC1/NFATC, MAPT/TAU and MACF1. Requires primed phosphorylation of the majority of its substrates. In skeletal muscle, contributes to insulin regulation of glycogen synthesis by phosphorylating and inhibiting GYS1 activity and hence glycogen synthesis. May also mediate the development of insulin resistance by regulating activation of transcription factors. Regulates protein synthesis by controlling the activity of initiation factor 2B (EIF2BE/EIF2B5) in the same manner as glycogen synthase. In Wnt signaling, GSK3B forms a multimeric complex with APC, AXIN1 and CTNNB1/beta-catenin and phosphorylates the N-terminus of CTNNB1 leading to its degradation mediated by ubiquitin/proteasomes. Phosphorylates JUN at sites proximal to its DNA-binding domain, thereby reducing its affinity for DNA. Phosphorylates NFATC1/NFATC on conserved serine residues promoting NFATC1/NFATC nuclear export, shutting off NFATC1/NFATC gene regulation, and thereby opposing the action of calcineurin. Phosphorylates MAPT/TAU on 'Thr-548', decreasing significantly MAPT/TAU ability to bind and stabilize microtubules. MAPT/TAU is the principal component of neurofibrillary tangles in Alzheimer disease. Plays an important role in ERBB2-dependent stabilization of microtubules at the cell cortex. Phosphorylates MACF1, inhibiting its binding to microtubules which is critical for its role in bulge stem cell migration and skin wound repair. Probably regulates NF-kappa-B (NFKB1) at the transcriptional level and is required for the NF-kappa-B-mediated anti-apoptotic response to TNF-alpha (TNF/TNFA). Negatively regulates replication in pancreatic beta-cells, resulting in apoptosis, loss of beta-cells and diabetes. Through phosphorylation of the anti-apoptotic protein MCL1, may control cell apoptosis in response to growth factors deprivation. Phosphorylates MUC1 in breast cancer cells, decreasing the interaction of MUC1 with CTNNB1/beta-catenin. Is necessary for the establishment of neuronal polarity and axon outgrowth. Phosphorylates MARK2, leading to inhibition of its activity. Phosphorylates SIK1 at 'Thr-182', leading to sustainment of its activity. Phosphorylates ZC3HAV1 which enhances its antiviral activity. Phosphorylates SNAI1, leading to its ubiquitination and proteasomal degradation. Phosphorylates SFPQ at 'Thr-687' upon T-cell activation. Phosphorylates NR1D1 st 'Ser-55' and 'Ser-59' and stabilizes it by protecting it from proteasomal degradation. Regulates the circadian clock via phosphorylation of the major clock components including BMAL1, CLOCK and PER2. Phosphorylates CLOCK AT 'Ser-427' and targets it for proteasomal degradation. Phosphorylates BMAL1 at 'Ser-17' and 'Ser-21' and primes it for ubiquitination and proteasomal degradation. Phosphorylates FBXL2 at 'Thr-404' and primes it for ubiquitination by the SCF(FBXO3) complex and proteasomal degradation. Phosphorylates OGT at 'Ser-3' or 'Ser-4' which positively regulates its activity. Phosphorylates MYCN in neuroblastoma cells which may promote its degradation. Regulates the circadian rhythmicity of hippocampal long-term potentiation and BMAL1 and PER2 expression. Acts as a regulator of autophagy by mediating phosphorylation of KAT5/TIP60 under starvation conditions, activating KAT5/TIP60 acetyltransferase activity and promoting acetylation of key autophagy regulators, such as ULK1 and RUBCNL/Pacer. Negatively regulates extrinsic apoptotic signaling pathway via death domain receptors. Promotes the formation of an anti-apoptotic complex, made of DDX3X, BRIC2 and GSK3B, at death receptors, including TNFRSF10B. The anti-apoptotic function is most effective with weak apoptotic signals and can be overcome by stronger stimulation. Phosphorylates E2F1, promoting the interaction between E2F1 and USP11, stabilizing E2F1 and promoting its activity. Phosphorylates mTORC2 complex component RICTOR at 'Ser-1235' in response to endoplasmic stress, inhibiting mTORC2. Phosphorylates FXR1, promoting FXR1 ubiquitination by the SCF(FBXO4) complex and FXR1 degradation by the proteasome. Phosphorylates interleukin-22 receptor subunit IL22RA1, preventing its proteasomal degradation. This is Glycogen synthase kinase-3 beta from Mus musculus (Mouse).